Consider the following 111-residue polypeptide: Large ribosomal subunit protein P2 (111 aa).

The tract at residues 81 to 111 (AAGGAAAPAAEEKKEEEKEESDEDMGFGLFD) is disordered. Phosphoserine is present on S101.

The protein belongs to the eukaryotic ribosomal protein P1/P2 family. In terms of assembly, P1 and P2 exist as dimers at the large ribosomal subunit.

Plays an important role in the elongation step of protein synthesis. The chain is Large ribosomal subunit protein P2 from Aspergillus fumigatus (strain ATCC MYA-4609 / CBS 101355 / FGSC A1100 / Af293) (Neosartorya fumigata).